The following is a 304-amino-acid chain: ATP synthase gamma chain (304 aa).

The protein belongs to the ATPase gamma chain family. F-type ATPases have 2 components, CF(1) - the catalytic core - and CF(0) - the membrane proton channel. CF(1) has five subunits: alpha(3), beta(3), gamma(1), delta(1), epsilon(1). CF(0) has three main subunits: a, b and c.

The protein localises to the cell membrane. Produces ATP from ADP in the presence of a proton gradient across the membrane. The gamma chain is believed to be important in regulating ATPase activity and the flow of protons through the CF(0) complex. This Mycobacterium ulcerans (strain Agy99) protein is ATP synthase gamma chain.